The primary structure comprises 1058 residues: Probable plasma membrane ATPase (1058 aa).

Residues 1 to 29 (MDNNQIPKNSPESSAINSAESSPKSNVSS) show a composition bias toward polar residues. A disordered region spans residues 1–123 (MDNNQIPKNS…SSSGKKEEDY (123 aa)). Topologically, residues 1-212 (MDNNQIPKNS…DVKRYPILEF (212 aa)) are cytoplasmic. Residues 31-40 (VLHENHHKEQ) are compositionally biased toward basic and acidic residues. Positions 41–66 (QQLQQQLQQEQQQQQLPTTPQSEPTQ) are enriched in low complexity. A compositionally biased stretch (polar residues) spans 96 to 111 (SLKTISGYPSSKNTEA). The chain crosses the membrane as a helical span at residues 213–232 (LYFMWNPLSWTMEVAAIVSI). Residues 233–237 (ALLDW) lie on the Extracellular side of the membrane. A helical membrane pass occupies residues 238 to 258 (VDFILICALLLLNATIGFIEE). Residues 259–387 (NTAGNAVEAL…GHLQVILRNI (129 aa)) lie on the Cytoplasmic side of the membrane. A helical membrane pass occupies residues 388-407 (GLFCISFIAIWVLVELLVDF). The Extracellular portion of the chain corresponds to 408 to 425 (LGYDGYCHGVGGGRCLPL). The chain crosses the membrane as a helical span at residues 426–447 (NNALVLLVGGIPIAMPTVLSVT). The Cytoplasmic segment spans residues 448–783 (MAIGATQLSK…SSRKIFQRMR (336 aa)). Asp-480 (4-aspartylphosphate intermediate) is an active-site residue. Mg(2+) is bound by residues Asp-728 and Asp-732. The chain crosses the membrane as a helical span at residues 784–805 (NYVIYSVAATVRICTTFGILTV). Topologically, residues 806–810 (AWNFK) are extracellular. Residues 811-833 (FPTIATVIIAILNDGTMLTISKD) form a helical membrane-spanning segment. The Cytoplasmic segment spans residues 834-849 (RVRARNEPDQWNLFEV). The helical transmembrane segment at 850 to 870 (FTMALCYGFYLVGSTIVFFAI) threads the bilayer. At 871–889 (IHDGTWFHDAINLRILTDN) the chain is on the extracellular side. The helical transmembrane segment at 890–910 (ELRGLIYLQVSISGLATIFVS) threads the bilayer. Topologically, residues 911-922 (RSQGFSYFERPG) are cytoplasmic. Residues 923–943 (NLVIFAFVMSQIVATFIGVYG) traverse the membrane as a helical segment. At 944 to 967 (FRGYPHDSFSDNPDYPVHGTNFQG) the chain is on the extracellular side. A helical membrane pass occupies residues 968-988 (CGWGWAVCAWIWCFLWYIPMD). At 989 to 1058 (FIKLGVTYIL…HKSVVTDNKV (70 aa)) the chain is on the cytoplasmic side.

This sequence belongs to the cation transport ATPase (P-type) (TC 3.A.3) family. Type IIIA subfamily.

The protein localises to the cell membrane. It carries out the reaction ATP + H2O + H(+)(in) = ADP + phosphate + 2 H(+)(out). Its activity is regulated as follows. Acid pH levels increase its ATPase activity. In terms of biological role, P-type plasma membrane H+-ATPase (proton pump). The proton gradient it generates drives the active transport of nutrients by H(+) symport. The resulting external acidification and/or internal alkinization may mediate growth responses. The protein is Probable plasma membrane ATPase (patB) of Dictyostelium discoideum (Social amoeba).